The primary structure comprises 752 residues: Peptidyl-prolyl cis-trans isomerase G (752 aa).

The 166-residue stretch at 11-176 folds into the PPIase cyclophilin-type domain; that stretch reads FFDIAINNQP…AEVRILSCGE (166 aa). A compositionally biased stretch (basic residues) spans 182-193; the sequence is KVKKEEKKRHKS. Residues 182–752 form a disordered region; sequence KVKKEEKKRH…SPGTDEDKSG (571 aa). Positions 194–214 are enriched in low complexity; sequence SSSSSSSDSDSSSDSQSSSES. Over residues 226 to 251 the composition is skewed to basic residues; that stretch reads RKRKKKHRKNSRKHKKEKKKRKKSKK. Phosphoserine is present on residues S252, S254, S255, S257, and S288. Residues 290 to 308 show a composition bias toward basic and acidic residues; it reads PKADDKERKNREREREREC. S313 is modified (phosphoserine). A compositionally biased stretch (basic residues) spans 327 to 345; the sequence is SGRKIKGRGPRRYRTPSRS. Basic and acidic residues-rich tracts occupy residues 346–366 and 377–447; these read RSRDRFRRSETPPHWRQEMQR and RWIK…DKYN. Residue S354 is modified to Phosphoserine. A Phosphothreonine modification is found at T356. The residue at position 384 (S384) is a Phosphoserine. K390 participates in a covalent cross-link: Glycyl lysine isopeptide (Lys-Gly) (interchain with G-Cter in SUMO2). Phosphoserine is present on residues S395, S411, and S413. Over residues 448–461 the composition is skewed to basic residues; the sequence is KNKVKKRGKSKSRS. Composition is skewed to basic and acidic residues over residues 462–552 and 577–598; these read KSKE…DLTK and RSHDRDRSRSKEYHRYREQEYR. The span at 599 to 625 shows a compositional bias: basic residues; sequence RRGRSRSRDRRTPGRSRSKDRRRRRRD. Basic and acidic residues predominate over residues 626-684; the sequence is SRSSEREESQSRNKDKYRSQESKSSHRKENSEGEKRTYSKSRDHNSSSNNREKKADREQ. S685 and S688 each carry phosphoserine. Residues 685 to 705 are compositionally biased toward polar residues; that stretch reads SPVSKTKQSSQDNEVKSSTLK. K691 participates in a covalent cross-link: Glycyl lysine isopeptide (Lys-Gly) (interchain with G-Cter in SUMO2). A phosphoserine mark is found at S694, S742, and S743. A compositionally biased stretch (basic and acidic residues) spans 706–752; it reads NQEDEKTRSPVEKENQKSKGQENDHVHDKNKKCDHESSPGTDEDKSG. A Phosphothreonine modification is found at T746. S751 carries the phosphoserine modification.

In terms of assembly, interacts with CLK1, PNN and with the phosphorylated C-terminal domain of RNA polymerase II.

Its subcellular location is the nucleus matrix. The protein localises to the nucleus speckle. The catalysed reaction is [protein]-peptidylproline (omega=180) = [protein]-peptidylproline (omega=0). Its activity is regulated as follows. Inhibited by cyclosporin A (CsA). Its function is as follows. PPIase that catalyzes the cis-trans isomerization of proline imidic peptide bonds in oligopeptides and may therefore assist protein folding. May be implicated in the folding, transport, and assembly of proteins. May play an important role in the regulation of pre-mRNA splicing. This chain is Peptidyl-prolyl cis-trans isomerase G (Ppig), found in Mus musculus (Mouse).